Consider the following 887-residue polypeptide: Exocyst complex component SEC3A (887 aa).

2 coiled-coil regions span residues 221–248 (IGEA…AILE) and 281–301 (LRHM…LEMQ). The interval 542–581 (GAGNDKKSQSNNDDGNDDDDLGIMDIDETDKKPGKNSPDL) is disordered. Residues 555–569 (DGNDDDDLGIMDIDE) are compositionally biased toward acidic residues.

This sequence belongs to the SEC3 family. In terms of assembly, the exocyst complex is composed of SEC3, SEC5, SEC6, SEC8, SEC10, EXO70A1 and EXO84B. Interacts with EXO70A1, SEC5A and ICR1, but not with ICR2. Binds to EXO70H1. Binds directly to B1L. In terms of tissue distribution, widely expressed. Preferentially expressed in tissues containing dividing and expanding cells, such as the shoot apical meristem, root tip, lateral root primordia and developing embryos.

It localises to the cytoplasm. Its subcellular location is the cytosol. The protein resides in the cell membrane. It is found in the cytoskeleton. The protein localises to the phragmoplast. It localises to the secreted. Its subcellular location is the extracellular exosome. Its function is as follows. Component of the exocyst complex involved in the docking of exocytic vesicles with fusion sites on the plasma membrane during regulated or polarized secretion. Involved in polarized cell growth and organ morphogenesis. During cytokinesis, involved in cell plate initiation, cell plate maturation and formation of new primary cell wall. During cytokinesis, involved in cell plate initiation, cell plate maturation and formation of new primary cell wall. In Arabidopsis thaliana (Mouse-ear cress), this protein is Exocyst complex component SEC3A.